We begin with the raw amino-acid sequence, 877 residues long: Alanine--tRNA ligase (877 aa).

Residues His566, His570, Cys668, and His672 each coordinate Zn(2+).

Belongs to the class-II aminoacyl-tRNA synthetase family. It depends on Zn(2+) as a cofactor.

It localises to the cytoplasm. It catalyses the reaction tRNA(Ala) + L-alanine + ATP = L-alanyl-tRNA(Ala) + AMP + diphosphate. In terms of biological role, catalyzes the attachment of alanine to tRNA(Ala) in a two-step reaction: alanine is first activated by ATP to form Ala-AMP and then transferred to the acceptor end of tRNA(Ala). Also edits incorrectly charged Ser-tRNA(Ala) and Gly-tRNA(Ala) via its editing domain. The polypeptide is Alanine--tRNA ligase (Staphylococcus aureus (strain USA300 / TCH1516)).